We begin with the raw amino-acid sequence, 1235 residues long: Receptor-type adenylate cyclase ESAG 4 (1235 aa).

The interval 1–20 is disordered; sequence MNMLHLSDRNASLAPSGGEH. The Cytoplasmic portion of the chain corresponds to 1-32; the sequence is MNMLHLSDRNASLAPSGGEHSLPTGGAVCRDA. The chain crosses the membrane as a helical span at residues 33–53; the sequence is MDILPVILRAPVALLLLLVVL. Residues 54 to 858 lie on the Extracellular side of the membrane; the sequence is PQLSVGAEAN…SNAGRISGAS (805 aa). N-linked (GlcNAc...) asparagine glycosylation is found at asparagine 63, asparagine 90, asparagine 97, asparagine 362, asparagine 531, asparagine 566, asparagine 705, and asparagine 830. A helical membrane pass occupies residues 859 to 879; that stretch reads LVGIIIGGALALFLVVALGVV. Over 880 to 1235 the chain is Cytoplasmic; the sequence is PYFFLRNTVI…VSSQVEERLL (356 aa). Positions 900 to 1054 constitute a Guanylate cyclase domain; sequence TLIFTDIESS…RTSNMAARTE (155 aa). The Mg(2+) site is built by aspartate 905 and aspartate 948.

The protein belongs to the adenylyl cyclase class-3 family. Mg(2+) serves as cofactor.

It is found in the membrane. It carries out the reaction ATP = 3',5'-cyclic AMP + diphosphate. Functionally, could act as a receptor for an unknown ligand. This chain is Receptor-type adenylate cyclase ESAG 4 (ESAG4), found in Trypanosoma brucei brucei.